We begin with the raw amino-acid sequence, 450 residues long: Tubulin alpha chain (450 aa).

GTP is bound at residue glutamine 11. Lysine 40 carries the post-translational modification N6-acetyllysine. Positions 71, 140, 144, 145, 179, 206, and 228 each coordinate GTP. Residue glutamate 71 coordinates Mg(2+). Glutamate 254 is an active-site residue. The tract at residues 431–450 (DYEEVGTDSVGEEDEEGEEY) is disordered.

This sequence belongs to the tubulin family. Dimer of alpha and beta chains. A typical microtubule is a hollow water-filled tube with an outer diameter of 25 nm and an inner diameter of 15 nM. Alpha-beta heterodimers associate head-to-tail to form protofilaments running lengthwise along the microtubule wall with the beta-tubulin subunit facing the microtubule plus end conferring a structural polarity. Microtubules usually have 13 protofilaments but different protofilament numbers can be found in some organisms and specialized cells. It depends on Mg(2+) as a cofactor. Post-translationally, some glutamate residues at the C-terminus are polyglycylated, resulting in polyglycine chains on the gamma-carboxyl group. Glycylation is mainly limited to tubulin incorporated into axonemes (cilia and flagella) whereas glutamylation is prevalent in neuronal cells, centrioles, axonemes, and the mitotic spindle. Both modifications can coexist on the same protein on adjacent residues, and lowering polyglycylation levels increases polyglutamylation, and reciprocally. The precise function of polyglycylation is still unclear. In terms of processing, some glutamate residues at the C-terminus are polyglutamylated, resulting in polyglutamate chains on the gamma-carboxyl group. Polyglutamylation plays a key role in microtubule severing by spastin (SPAST). SPAST preferentially recognizes and acts on microtubules decorated with short polyglutamate tails: severing activity by SPAST increases as the number of glutamates per tubulin rises from one to eight, but decreases beyond this glutamylation threshold. Acetylation of alpha chains at Lys-40 is located inside the microtubule lumen. This modification has been correlated with increased microtubule stability, intracellular transport and ciliary assembly. Post-translationally, undergoes a tyrosination/detyrosination cycle, the cyclic removal and re-addition of a C-terminal tyrosine residue by the enzymes tubulin tyrosine carboxypeptidase (MATCAP, VASH1 or VASH2) and tubulin tyrosine ligase (TTL), respectively. In terms of processing, tyrosination promotes microtubule interaction with CAP-Gly microtubule plus-end tracking proteins. Tyrosinated tubulins regulate the initiation of dynein-driven motility. Detyrosination is involved in metaphase plate congression by guiding chromosomes during mitosis. Detyrosination increases microtubules-dependent mechanotransduction in dystrophic cardiac and skeletal muscle. In cardiomyocytes, detyrosinated microtubules are required to resist to contractile compression during contraction.

It localises to the cytoplasm. The protein resides in the cytoskeleton. It carries out the reaction GTP + H2O = GDP + phosphate + H(+). Tubulin is the major constituent of microtubules, a cylinder consisting of laterally associated linear protofilaments composed of alpha- and beta-tubulin heterodimers. Microtubules grow by the addition of GTP-tubulin dimers to the microtubule end, where a stabilizing cap forms. Below the cap, tubulin dimers are in GDP-bound state, owing to GTPase activity of alpha-tubulin. The protein is Tubulin alpha chain of Oncorhynchus keta (Chum salmon).